The sequence spans 159 residues: Ribosomal RNA large subunit methyltransferase H (159 aa).

Residues L76, G108, and 127-132 (FGQLTL) each bind S-adenosyl-L-methionine.

This sequence belongs to the RNA methyltransferase RlmH family. Homodimer.

It is found in the cytoplasm. The catalysed reaction is pseudouridine(1915) in 23S rRNA + S-adenosyl-L-methionine = N(3)-methylpseudouridine(1915) in 23S rRNA + S-adenosyl-L-homocysteine + H(+). In terms of biological role, specifically methylates the pseudouridine at position 1915 (m3Psi1915) in 23S rRNA. The polypeptide is Ribosomal RNA large subunit methyltransferase H (Streptococcus suis (strain 05ZYH33)).